The chain runs to 305 residues: Ribosomal RNA small subunit methyltransferase H (305 aa).

S-adenosyl-L-methionine is bound by residues 33–35 (GGY), aspartate 51, phenylalanine 78, aspartate 96, and glutamine 103.

The protein belongs to the methyltransferase superfamily. RsmH family.

The protein resides in the cytoplasm. The enzyme catalyses cytidine(1402) in 16S rRNA + S-adenosyl-L-methionine = N(4)-methylcytidine(1402) in 16S rRNA + S-adenosyl-L-homocysteine + H(+). Functionally, specifically methylates the N4 position of cytidine in position 1402 (C1402) of 16S rRNA. The protein is Ribosomal RNA small subunit methyltransferase H of Rickettsia bellii (strain RML369-C).